A 3013-amino-acid polypeptide reads, in one-letter code: DmX-like protein 1 (3013 aa).

WD repeat units follow at residues 108-145 (FLDS…TEDE), 164-204 (KTAS…RPAV), and 227-275 (AHPR…NDCF). Phosphoserine is present on residues S322, S420, S423, and S434. The interval 418-442 (PSSEASVEDSIQADLKSDEELDDGV) is disordered. One copy of the WD 4 repeat lies at 474–514 (DHQIEVLLSEWSKNADMLFSIHPMDGSLLVWHVDWLDEYQP). A Phosphoserine modification is found at S572. 2 WD repeats span residues 578 to 619 (AHSK…ESAF) and 842 to 893 (KKRL…TPVS). 2 positions are modified to phosphoserine: S916 and S922. 3 WD repeats span residues 970–1008 (HLSS…GESA), 1145–1193 (EDGS…PLSK), and 1208–1248 (GAPP…EPVI). 4 positions are modified to phosphoserine: S1829, S1896, S1903, and S1965. 2 disordered regions span residues 2364–2406 (GQAN…PPAV) and 2431–2462 (QSRA…GLQL). Positions 2385-2398 (SKVSARESPVSSSS) are enriched in low complexity. The segment covering 2437-2455 (DSEESLESDDEEEEDDDDA) has biased composition (acidic residues). WD repeat units follow at residues 2728 to 2769 (KAIN…TCFR), 2771 to 2810 (GGNS…CPVT), 2822 to 2864 (CHNK…ANSL), 2870 to 2909 (CHDS…QRQL), 2912 to 2951 (SHDS…LLHT), and 2964 to 3002 (NIGT…SPLN).

In Mus musculus (Mouse), this protein is DmX-like protein 1 (Dmxl1).